Here is a 237-residue protein sequence, read N- to C-terminus: Concanavalin V (237 aa).

Mn(2+) contacts are provided by Glu8 and Asp10. Ca(2+)-binding residues include Asp10, Tyr12, Asn14, and Asp19. Asn14 is an a carbohydrate binding site. 2 residues coordinate Mn(2+): Asp19 and His24. A carbohydrate-binding positions include Gly70, 98-100, Asp208, and Arg228; that span reads GLY.

Belongs to the leguminous lectin family. As to quaternary structure, homotetramer. Post-translationally, concanavalin A-like lectins of the Diocleinae subtribe undergo proteolytic processing referred to as circular permutation. The propeptide is split into an N-terminal and a C-terminal part, the gamma and beta chain, respectively. These are then religated in beta-gamma order to form the mature alpha chain. The beta and gamma chains can often be detected in cell extracts. Residues 1-118 of the mature chain, as displayed here, probably constitute the beta chain in the propeptide, residues 119-237 the gamma chain.

D-mannose/D-glucose-binding lectin which binds alpha-methyl-D-mannoside, D-mannose and D-glucose in that order. Also binds to serum fetuin and ovalbumin. Has hemagglutinating activity towards rabbit erythrocytes. Is not toxic towards larvae of the brine shrimp Artemia. Induces relaxation in rat endothelized aorta. Shows a transient edematogenic effect in rat. This Canavalia cathartica (Jackbean) protein is Concanavalin V.